The sequence spans 1013 residues: Retinoblastoma-related protein 1 (1013 aa).

Positions 406–607 (TPVSTAMTTA…EKGSSMYNSL (202 aa)) are domain A. The interval 406–858 (TPVSTAMTTA…NEIFIPAVKP (453 aa)) is pocket. Residues 608–727 (IVARPSLALE…PGGGGETCAE (120 aa)) are spacer. The interval 728-858 (TGINIFFTKI…NEIFIPAVKP (131 aa)) is domain B. Phosphoserine occurs at positions 885 and 898. A disordered region spans residues 979 to 1013 (VANSLNLQNQNQNQNGSDASSSGGAAPLKTEPTDS). Positions 980–1004 (ANSLNLQNQNQNQNGSDASSSGGAA) are enriched in low complexity.

It belongs to the retinoblastoma protein (RB) family. In terms of assembly, interacts with the begomovirus replication-associated protein (Rep), the nanovirus Clink protein, the mastrevirus RepA protein, E2FA, E2FB and E2FC. Interacts with MSI1 through its Domain A. Interacts with ATPK1/S6K1. Interacts with SCR. Interacts with HAT2. Interacts with FAMA. Interacts with MYB124 and MYB88. Component of a DREAM-like complex which modulates a variety of developmentally regulated genes and of the mitotic genes in proliferating and differentiated cells. Associates with MYB3R3 in both earlier and later stages of leaves development. Interacts with MYB3R4 only at early stages of leaves development. In terms of processing, highly phosphorylated by CDKA-1 during G1 to S phase transition. Once hyper-phosphorylated, becomes inactive and unable to interact with E2F. Post-translationally, ubiquitinated. Subject to proteasome-dependent degradation during sucrose starvation. As to expression, expressed in actively dividing cells. Detected in the shoot apical meristem, in young leaf primordia and in both sporophytic tissue and the megagametophyte.

Its subcellular location is the nucleus. In terms of biological role, key regulator of entry into cell division. Acts as a transcription repressor of E2F target genes, whose activity is required for progress from the G1 to the S phase of the cell cycle. Hyperphosphorylation by CDKA-1 prevents the binding to E2F transcription factors, allowing G1 to S phase transition to operate. Forms a stable complex with E2FA that functions in maintaining cell proliferation through repression of cell differentiation. Plays a central role in the mechanism controlling meristem cell differentiation, cell fate establishment and cell fate maintenance during organogenesis and gametogenesis. Required during lateral organ production. Also involved in controlling asymmetric divisions of stem cells in different stem cell niches. Acts as a negative regulator of cell proliferation during leaf and gametophytes development. At later stages of development, restricts the progression through additional endocycles. In the leaf, plays a role in the control of the mesophyll differentiation. Another role is its implication in the regulation of imprinted genes. Acts together with MSI1 to repress the expression of MET1 during gametogenesis. This in turn activates expression of the imprinted genes FIS2 and FWA. Regulates many genes of the polycomb repressive complex 2 (PRC2). Plays an important role in meiosis affecting different aspects of this complex process. Functions as a positive regulator of the developmental switch from embryonic heterotrophic growth to autotrophic growth. Interaction with mastrevirus RepA or nanovirus Clink protein disrupts the RBR/E2F interaction and releases the transcription of replicative enzymes needed by the virus by increasing the E2F DNA-binding activity. The chain is Retinoblastoma-related protein 1 (RBR1) from Arabidopsis thaliana (Mouse-ear cress).